Reading from the N-terminus, the 1036-residue chain is Multidrug resistance protein MdtC (1036 aa).

The next 10 helical transmembrane spans lie at 12-34 (VATT…LLPV), 336-353 (RALV…FLFL), 360-382 (LIPA…LCGF), 431-450 (VGFT…IPLL), 463-485 (FAIT…TPMM), 528-547 (WVLL…YINI), 853-875 (LFLI…ESYI), 895-917 (LELF…IGIV), 949-971 (LRFR…LVLS), and 986-1008 (IVGG…YLCF).

The protein belongs to the resistance-nodulation-cell division (RND) (TC 2.A.6) family. MdtC subfamily. Part of a tripartite efflux system composed of MdtA, MdtB and MdtC. MdtC forms a heteromultimer with MdtB.

The protein localises to the cell inner membrane. This Photorhabdus laumondii subsp. laumondii (strain DSM 15139 / CIP 105565 / TT01) (Photorhabdus luminescens subsp. laumondii) protein is Multidrug resistance protein MdtC.